The sequence spans 509 residues: Phosphoprotein (509 aa).

Disordered stretches follow at residues 33-84 (LESW…LGFR), 131-236 (VQAN…DGNS), and 256-281 (PESR…SAKT). The span at 44 to 65 (GRATPNPDTSEGDHQNINQSCS) shows a compositional bias: polar residues. Over residues 146–157 (DGSDDSDVDSGP) the composition is skewed to acidic residues. Ser-151 carries the post-translational modification Phosphoserine. Positions 178 to 187 (RSTDVEKLEG) are enriched in basic and acidic residues. Positions 221 to 236 (SRPSAQSIKKGTDGNS) are enriched in polar residues. The interval 303–376 (SEFEYEDDLF…LSSIMIAIPG (74 aa)) is multimerization. Residues 459 to 509 (SSRSVIRSIIKSSKLNIDHKDYLLDLLNDVKGSKDLKEFHKMLTAILAKQP) form an interaction with the nucleocapsid (N-RNA) region.

The protein belongs to the morbillivirus P protein family. Homotetramer. Interacts (via multimerization domain) with polymerase L; this interaction forms the polymerase L-P complex. Interacts (via N-terminus) with N0 (via Ncore); this interaction allows P to chaperon N0 to avoid N polymerization before encapsidation. Interacts (via C-terminus) with N-RNA template; this interaction positions the polymerase on the template for both transcription and replication. Interacts with host ISG15; this interaction disrupts the activity of the N0-P complex. In terms of processing, phosphorylation on serines by host CK2 is necessary for the formation of viral factories.

Functionally, essential cofactor of the RNA polymerase L that plays a central role in the transcription and replication by forming the polymerase complex with RNA polymerase L and recruiting L to the genomic N-RNA template for RNA synthesis. Also plays a central role in the encapsidation of nascent RNA chains by forming the encapsidation complex with the nucleocapsid protein N (N-P complex). Acts as a chaperone for newly synthesized free N protein, so-called N0, allowing encapsidation of nascent RNA chains during replication. The nucleoprotein protein N prevents excessive phosphorylation of P, which leads to down-regulation of viral transcription/ replication. Participates, together with N, in the formation of viral factories (viroplasms), which are large inclusions in the host cytoplasm where replication takes place. The polypeptide is Phosphoprotein (P/V) (Capra hircus (Goat)).